We begin with the raw amino-acid sequence, 254 residues long: Segregation and condensation protein A (254 aa).

It belongs to the ScpA family. Component of a cohesin-like complex composed of ScpA, ScpB and the Smc homodimer, in which ScpA and ScpB bind to the head domain of Smc. The presence of the three proteins is required for the association of the complex with DNA.

It is found in the cytoplasm. Its function is as follows. Participates in chromosomal partition during cell division. May act via the formation of a condensin-like complex containing Smc and ScpB that pull DNA away from mid-cell into both cell halves. The sequence is that of Segregation and condensation protein A from Brevibacillus brevis (strain 47 / JCM 6285 / NBRC 100599).